A 227-amino-acid polypeptide reads, in one-letter code: Transmembrane emp24 domain-containing protein 1 (227 aa).

An N-terminal signal peptide occupies residues 1–23 (MMAAGTALGLALWLLLPPVGVGG). At 24–194 (AGPPPIQDGE…LQEGNLERVN (171 aa)) the chain is on the extracellular side. The 83-residue stretch at 43–125 (KQCFYQSAPA…EKLVFFELIF (83 aa)) folds into the GOLD domain. Residues 145–170 (EILEVKMEDIKESIETMRIRLERSIQ) are a coiled coil. A helical transmembrane segment spans residues 195 to 215 (FWSAVNVAVLLLVAVLQVCTL). Topologically, residues 216–227 (KRFFQDKRPVPM) are cytoplasmic. Positions 218–219 (FF) match the COPII vesicle coat-binding motif. The COPI vesicle coat-binding motif lies at 218 to 227 (FFQDKRPVPM).

It belongs to the EMP24/GP25L family. In terms of assembly, homodimer in endoplasmic reticulum, endoplasmic reticulum-Golgi intermediate compartment and cis-Golgi network. Interacts with IL1RL1. Interacts with RNF26; this interaction is important to modulate innate immune signaling through the cGAS-STING pathway.

It localises to the cell membrane. The protein resides in the endoplasmic reticulum membrane. It is found in the golgi apparatus. Its subcellular location is the cis-Golgi network membrane. The protein localises to the endoplasmic reticulum-Golgi intermediate compartment membrane. Functionally, potential role in vesicular protein trafficking, mainly in the early secretory pathway. May act as a cargo receptor at the lumenal side for incorporation of secretory cargo molecules into transport vesicles and may be involved in vesicle coat formation at the cytoplasmic side. Plays a positive role in IL-33-mediated IL-8 and IL-6 production by interacting with interleukin-33 receptor IL1RL1. Plays also a role in the modulation of innate immune signaling through the cGAS-STING pathway by interacting with RNF26. This chain is Transmembrane emp24 domain-containing protein 1 (TMED1), found in Bos taurus (Bovine).